A 795-amino-acid chain; its full sequence is Levansucrase (795 aa).

A signal peptide spans 1 to 36 (METKVRKKMYKKGKFWVVATITTAMLTGIGLSSVQA). Polar residues-rich tracts occupy residues 42 to 66 (TQVS…SAAE) and 112 to 130 (QAAT…GQTN). Disordered regions lie at residues 42–83 (TQVS…NPAA) and 103–138 (ESKA…ATKE). The sucrose site is built by Trp-245, Asp-246, and Ser-315. Residue Asp-246 is the Nucleophile of the active site. Asp-394 lines the Ca(2+) pocket. Residues Arg-399 and Asp-400 each contribute to the sucrose site. Residues Gln-425, Asn-464, and Asp-496 each coordinate Ca(2+). Glu-497 contributes to the sucrose binding site. Catalysis depends on Glu-499, which acts as the Proton donor/acceptor. Sucrose is bound at residue Arg-517. A helical transmembrane segment spans residues 774-794 (GNSFFAALLALFSAFCVSIGF).

It belongs to the glycosyl hydrolase 68 family.

The protein resides in the cell membrane. It is found in the cell surface. The catalysed reaction is [6)-beta-D-fructofuranosyl-(2-&gt;](n) alpha-D-glucopyranoside + sucrose = [6)-beta-D-fructofuranosyl-(2-&gt;](n+1) alpha-D-glucopyranoside + D-glucose. Ca(2+) may play an important structural role and promote stability of levansucrase. Catalyzes the synthesis of levan, a fructose polymer, by transferring the fructosyl moiety from sucrose to a growing acceptor molecule. Also displays sucrose hydrolase activity. This is Levansucrase from Streptococcus mutans serotype c (strain ATCC 700610 / UA159).